The primary structure comprises 261 residues: Proliferating cell nuclear antigen (261 aa).

Residues K14, K77, and K80 each carry the N6-acetyllysine modification. A DNA-binding region spans residues 61–80 (RCDRNLAMGVNLTSMSKILK). C135 and C162 are oxidised to a cystine. A Glycyl lysine isopeptide (Lys-Gly) (interchain with G-Cter in SUMO2); alternate cross-link involves residue K164. K164 participates in a covalent cross-link: Glycyl lysine isopeptide (Lys-Gly) (interchain with G-Cter in ubiquitin); alternate. Y211 is subject to Phosphotyrosine; by EGFR. At K248 the chain carries N6-acetyllysine. K254 is covalently cross-linked (Glycyl lysine isopeptide (Lys-Gly) (interchain with G-Cter in SUMO2)).

It belongs to the PCNA family. In terms of assembly, homotrimer. Interacts with p300/EP300; the interaction occurs on chromatin in UV-irradiated damaged cells. Interacts with CREBBP (via transactivation domain and C-terminus); the interaction occurs on chromatin in UV-irradiated damaged cells. Directly interacts with POLD1, POLD3 and POLD4 subunits of the DNA polymerase delta complex, POLD3 being the major interacting partner; the interaction with POLD3 is inhibited by CDKN1A/p21(CIP1). Forms a complex with activator 1 heteropentamer in the presence of ATP. Interacts with EXO1, POLH, POLK, DNMT1, ERCC5, FEN1, CDC6 and POLDIP2. Interacts with POLB. Interacts with APEX2; this interaction is triggered by reactive oxygen species and increased by misincorporation of uracil in nuclear DNA. Forms a ternary complex with DNTTIP2 and core histone. Interacts with KCTD10 and PPP1R15A. Interacts with SMARCA5/SNF2H. Interacts with BAZ1B/WSTF; the interaction is direct and is required for BAZ1B/WSTF binding to replication foci during S phase. Interacts with HLTF and SHPRH. Interacts with NUDT15; this interaction is disrupted in response to UV irradiation and acetylation. Interacts with CDKN1A/p21(CIP1) and CDT1; interacts via their PIP-box which also recruits the DCX(DTL) complex. The interaction with CDKN1A inhibits POLD3 binding. Interacts with DDX11. Interacts with EGFR; positively regulates PCNA. Interacts with PARPBP. Interacts (when ubiquitinated) with SPRTN; leading to enhance RAD18-mediated PCNA ubiquitination. Interacts (when polyubiquitinated) with ZRANB3. Interacts with SMARCAD1. Interacts with CDKN1C. Interacts with PCLAF (via PIP-box). Interacts with RTEL1 (via PIP-box); the interaction is direct and essential for the suppression of telomere fragility. Interacts with FAM111A (via PIP-box); the interaction is direct and required for PCNA loading on chromatin binding. Interacts with LIG1. Interacts with SETMAR. Interacts with ANKRD17. Interacts with FBXO18/FBH1 (via PIP-box); the interaction recruits the DCX(DTL) complex and promotes ubiquitination and degradation of FBXO18/FBH1. Interacts with POLN. Interacts with SDE2 (via PIP-box); the interaction is direct and prevents ultraviolet light induced monoubiquitination. Component of the replisome complex composed of at least DONSON, MCM2, MCM7, PCNA and TICRR; interaction at least with PCNA occurs during DNA replication. Interacts with MAPK15; the interaction is chromatin binding dependent and prevents MDM2-mediated PCNA destruction by inhibiting the association of PCNA with MDM2. Interacts with PARP10 (via PIP-box). Interacts with DDI2. Interacts with HMCES (via PIP-box). Interacts with TRAIP (via PIP-box). Interacts with UHRF2. Interacts with ALKBH2; this interaction is enhanced during the S-phase of the cell cycle. Interacts with ATAD5; the interaction promotes USP1-mediated PCNA deubiquitination. Interacts (when phosphorylated) with GRB2. Interacts with ANG. Interacts with nuclear UNG; this interaction mediates UNG recruitment to S-phase replication foci. Interacts with ERCC6L2 (via an atypical PIP-box); this interaction facilitates cenrtomeric localization of ERCC6L2. In terms of processing, phosphorylated. Phosphorylation at Tyr-211 by EGFR stabilizes chromatin-associated PCNA. Acetylated by CREBBP and p300/EP300; preferentially acetylated by CREBBP on Lys-80, Lys-13 and Lys-14 and on Lys-77 by p300/EP300 upon loading on chromatin in response to UV irradiation. Lysine acetylation disrupts association with chromatin, hence promoting PCNA ubiquitination and proteasomal degradation in response to UV damage in a CREBBP- and EP300-dependent manner. Acetylation disrupts interaction with NUDT15 and promotes degradation. Post-translationally, ubiquitinated. Following DNA damage, can be either monoubiquitinated to stimulate direct bypass of DNA lesions by specialized DNA polymerases or polyubiquitinated to promote recombination-dependent DNA synthesis across DNA lesions by template switching mechanisms. Following induction of replication stress, monoubiquitinated by the UBE2B-RAD18 complex on Lys-164, leading to recruit translesion (TLS) polymerases, which are able to synthesize across DNA lesions in a potentially error-prone manner. An error-free pathway also exists and requires non-canonical polyubiquitination on Lys-164 through 'Lys-63' linkage of ubiquitin moieties by the E2 complex UBE2N-UBE2V2 and the E3 ligases, HLTF, RNF8 and SHPRH. This error-free pathway, also known as template switching, employs recombination mechanisms to synthesize across the lesion, using as a template the undamaged, newly synthesized strand of the sister chromatid. Monoubiquitination at Lys-164 also takes place in undamaged proliferating cells, and is mediated by the DCX(DTL) complex, leading to enhance PCNA-dependent translesion DNA synthesis. Sumoylated during S phase. In terms of processing, methylated on glutamate residues by ARMT1.

The protein resides in the nucleus. Its function is as follows. Auxiliary protein of DNA polymerase delta and epsilon, is involved in the control of eukaryotic DNA replication by increasing the polymerase's processibility during elongation of the leading strand. Induces a robust stimulatory effect on the 3'-5' exonuclease and 3'-phosphodiesterase, but not apurinic-apyrimidinic (AP) endonuclease, APEX2 activities. Has to be loaded onto DNA in order to be able to stimulate APEX2. Plays a key role in DNA damage response (DDR) by being conveniently positioned at the replication fork to coordinate DNA replication with DNA repair and DNA damage tolerance pathways. Acts as a loading platform to recruit DDR proteins that allow completion of DNA replication after DNA damage and promote postreplication repair: Monoubiquitinated PCNA leads to recruitment of translesion (TLS) polymerases, while 'Lys-63'-linked polyubiquitination of PCNA is involved in error-free pathway and employs recombination mechanisms to synthesize across the lesion. The sequence is that of Proliferating cell nuclear antigen (PCNA) from Cricetulus griseus (Chinese hamster).